The following is a 282-amino-acid chain: 4-hydroxybenzoate octaprenyltransferase (282 aa).

9 helical membrane-spanning segments follow: residues 17–37 (IGILLLWYPTAWALWMANQGF), 40–60 (IDLLMIFLLGTVFMRSAGCVI), 90–110 (AFILLFILLCASLLLLLKLPI), 113–133 (FYFAVISVLITFVYPFCKRFL), 135–155 (APQLILGLAFSMGIPMAFIAS), 163–183 (FVVLFLINFTWIIAYDTMYAM), 207–227 (LIIALLLIFLHSLWLVWAINK), 231–251 (WFFYLLWCTAAGILTYQLKLI), and 262–282 (AFLVSGYYGLVMWFAVGLALI).

This sequence belongs to the UbiA prenyltransferase family. Requires Mg(2+) as cofactor.

The protein resides in the cell inner membrane. The enzyme catalyses all-trans-octaprenyl diphosphate + 4-hydroxybenzoate = 4-hydroxy-3-(all-trans-octaprenyl)benzoate + diphosphate. Its pathway is cofactor biosynthesis; ubiquinone biosynthesis. In terms of biological role, catalyzes the prenylation of para-hydroxybenzoate (PHB) with an all-trans polyprenyl group. Mediates the second step in the final reaction sequence of ubiquinone-8 (UQ-8) biosynthesis, which is the condensation of the polyisoprenoid side chain with PHB, generating the first membrane-bound Q intermediate 3-octaprenyl-4-hydroxybenzoate. This is 4-hydroxybenzoate octaprenyltransferase from Legionella pneumophila (strain Paris).